A 61-amino-acid polypeptide reads, in one-letter code: MVMMKSFIVKGKFKAGNSWEKFTKKIESQNEKNATDKTYSIFGSKHGVKRSQIQIESVAEE.

The protein belongs to the eukaryotic ribosomal protein eL20 family. Part of the 50S ribosomal subunit. Binds 23S rRNA.

This chain is Large ribosomal subunit protein eL20, found in Methanosarcina mazei (strain ATCC BAA-159 / DSM 3647 / Goe1 / Go1 / JCM 11833 / OCM 88) (Methanosarcina frisia).